The following is a 372-amino-acid chain: Cytochrome b (372 aa).

The next 4 membrane-spanning stretches (helical) occupy residues 25-45, 69-90, 105-125, and 170-190; these read FGSMLLTCLMLQTITGFFLAL, WIMQNLHAISASLFFVCIYIHI, WLSGTALLITLMATAFFGYVL, and FFALHFILPFIIISLSSIHII. Positions 75 and 89 each coordinate heme b. Heme b-binding residues include H174 and H188. Position 193 (H193) interacts with a ubiquinone. 4 consecutive transmembrane segments (helical) span residues 218–238, 280–300, 312–332, and 339–358; these read YKDMLMATTMITLLFLILSFA, LGGTLALIMSVMILTTMPFTH, LSQILFWTLIATFITITWTAS, and FITISQTTSIIYFFFFITTP.

It belongs to the cytochrome b family. The cytochrome bc1 complex contains 3 respiratory subunits (MT-CYB, CYC1 and UQCRFS1), 2 core proteins (UQCRC1 and UQCRC2) and probably 6 low-molecular weight proteins. Heme b serves as cofactor.

It localises to the mitochondrion inner membrane. In terms of biological role, component of the ubiquinol-cytochrome c reductase complex (complex III or cytochrome b-c1 complex) that is part of the mitochondrial respiratory chain. The b-c1 complex mediates electron transfer from ubiquinol to cytochrome c. Contributes to the generation of a proton gradient across the mitochondrial membrane that is then used for ATP synthesis. The sequence is that of Cytochrome b (MT-CYB) from Naja nivea (Cape cobra).